Reading from the N-terminus, the 100-residue chain is Bombyxin A-2 homolog (100 aa).

Positions 1–18 are cleaved as a signal peptide; sequence MRTQVLFLIVVLAVMASG. 3 disulfides stabilise this stretch: Cys-26/Cys-85, Cys-38/Cys-98, and Cys-84/Cys-89. A propeptide spans 47–75 (c peptide like); it reads PPYISSENEGYGWKWLERQRARQLDEARG.

This sequence belongs to the insulin family. As to quaternary structure, heterodimer of a B chain and an A chain linked by two disulfide bonds.

The protein resides in the secreted. In terms of biological role, brain peptide responsible for activation of prothoracic glands to produce ecdysone in insects. The polypeptide is Bombyxin A-2 homolog (SBXA2) (Samia cynthia (Ailanthus silkmoth)).